A 211-amino-acid polypeptide reads, in one-letter code: NADH-quinone oxidoreductase subunit I (211 aa).

The segment at 1–27 is disordered; that stretch reads MANTDRPALPHKRAVPPSRADSGPRRR. 4Fe-4S ferredoxin-type domains follow at residues 71 to 101 and 117 to 146; these read LNRY…VEGA and RVYQ…MTYD. [4Fe-4S] cluster is bound by residues C81, C84, C87, C91, C126, C129, C132, and C136.

This sequence belongs to the complex I 23 kDa subunit family. As to quaternary structure, NDH-1 is composed of 14 different subunits. Subunits NuoA, H, J, K, L, M, N constitute the membrane sector of the complex. It depends on [4Fe-4S] cluster as a cofactor.

The protein resides in the cell membrane. It catalyses the reaction a quinone + NADH + 5 H(+)(in) = a quinol + NAD(+) + 4 H(+)(out). Functionally, NDH-1 shuttles electrons from NADH, via FMN and iron-sulfur (Fe-S) centers, to quinones in the respiratory chain. The immediate electron acceptor for the enzyme in this species is believed to be menaquinone. Couples the redox reaction to proton translocation (for every two electrons transferred, four hydrogen ions are translocated across the cytoplasmic membrane), and thus conserves the redox energy in a proton gradient. The sequence is that of NADH-quinone oxidoreductase subunit I from Mycobacterium tuberculosis (strain ATCC 25177 / H37Ra).